The chain runs to 228 residues: L-ribulose-5-phosphate 4-epimerase UlaF (228 aa).

Substrate contacts are provided by residues 26–27, 43–44, and 72–73; these read GN, SG, and SS. Zn(2+) is bound by residues Asp-74, His-93, and His-95. Catalysis depends on Asp-118, which acts as the Proton donor/acceptor. His-167 provides a ligand contact to Zn(2+). Tyr-225 serves as the catalytic Proton donor/acceptor.

Belongs to the aldolase class II family. AraD/FucA subfamily. Zn(2+) serves as cofactor.

It carries out the reaction L-ribulose 5-phosphate = D-xylulose 5-phosphate. Its pathway is cofactor degradation; L-ascorbate degradation; D-xylulose 5-phosphate from L-ascorbate: step 4/4. Catalyzes the isomerization of L-ribulose 5-phosphate to D-xylulose 5-phosphate. Is involved in the anaerobic L-ascorbate utilization. The sequence is that of L-ribulose-5-phosphate 4-epimerase UlaF from Salmonella paratyphi B (strain ATCC BAA-1250 / SPB7).